The following is a 101-amino-acid chain: Ribonuclease kappa-A (101 aa).

2 helical membrane passes run alanine 13–phenylalanine 33 and valine 68–cysteine 88.

It belongs to the RNase K family.

It localises to the membrane. Functionally, endoribonuclease which preferentially cleaves ApU and ApG phosphodiester bonds. This Xenopus laevis (African clawed frog) protein is Ribonuclease kappa-A (rnasek-a).